The primary structure comprises 189 residues: Peptidyl-tRNA hydrolase (189 aa).

Y15 is a binding site for tRNA. Residue H20 is the Proton acceptor of the active site. TRNA contacts are provided by Y67, N69, and N115.

Belongs to the PTH family. In terms of assembly, monomer.

Its subcellular location is the cytoplasm. The enzyme catalyses an N-acyl-L-alpha-aminoacyl-tRNA + H2O = an N-acyl-L-amino acid + a tRNA + H(+). Functionally, hydrolyzes ribosome-free peptidyl-tRNAs (with 1 or more amino acids incorporated), which drop off the ribosome during protein synthesis, or as a result of ribosome stalling. Catalyzes the release of premature peptidyl moieties from peptidyl-tRNA molecules trapped in stalled 50S ribosomal subunits, and thus maintains levels of free tRNAs and 50S ribosomes. This chain is Peptidyl-tRNA hydrolase, found in Symbiobacterium thermophilum (strain DSM 24528 / JCM 14929 / IAM 14863 / T).